The sequence spans 100 residues: NADH-quinone oxidoreductase subunit K (100 aa).

Helical transmembrane passes span 4–24 (LQHG…GLII), 28–48 (LLFM…AFVV), and 60–80 (VMYI…LALL).

This sequence belongs to the complex I subunit 4L family. In terms of assembly, NDH-1 is composed of 13 different subunits. Subunits NuoA, H, J, K, L, M, N constitute the membrane sector of the complex.

It is found in the cell inner membrane. It catalyses the reaction a quinone + NADH + 5 H(+)(in) = a quinol + NAD(+) + 4 H(+)(out). Its function is as follows. NDH-1 shuttles electrons from NADH, via FMN and iron-sulfur (Fe-S) centers, to quinones in the respiratory chain. The immediate electron acceptor for the enzyme in this species is believed to be ubiquinone. Couples the redox reaction to proton translocation (for every two electrons transferred, four hydrogen ions are translocated across the cytoplasmic membrane), and thus conserves the redox energy in a proton gradient. The protein is NADH-quinone oxidoreductase subunit K of Yersinia enterocolitica serotype O:8 / biotype 1B (strain NCTC 13174 / 8081).